Reading from the N-terminus, the 291-residue chain is tRNA dimethylallyltransferase (291 aa).

An ATP-binding site is contributed by 17 to 24; the sequence is GPTASGKS. 19-24 is a substrate binding site; sequence TASGKS.

The protein belongs to the IPP transferase family. As to quaternary structure, monomer. Requires Mg(2+) as cofactor.

It carries out the reaction adenosine(37) in tRNA + dimethylallyl diphosphate = N(6)-dimethylallyladenosine(37) in tRNA + diphosphate. Its function is as follows. Catalyzes the transfer of a dimethylallyl group onto the adenine at position 37 in tRNAs that read codons beginning with uridine, leading to the formation of N6-(dimethylallyl)adenosine (i(6)A). This is tRNA dimethylallyltransferase from Cereibacter sphaeroides (strain ATCC 17025 / ATH 2.4.3) (Rhodobacter sphaeroides).